The primary structure comprises 220 residues: Cytidylate kinase (220 aa).

Residue 10–18 participates in ATP binding; that stretch reads GPAGAGKST.

This sequence belongs to the cytidylate kinase family. Type 1 subfamily.

It is found in the cytoplasm. It catalyses the reaction CMP + ATP = CDP + ADP. It carries out the reaction dCMP + ATP = dCDP + ADP. This Alkaliphilus metalliredigens (strain QYMF) protein is Cytidylate kinase.